A 303-amino-acid polypeptide reads, in one-letter code: N-acetyl-D-glucosamine kinase (303 aa).

Residues 4 to 11 (GFDIGGTK) and 133 to 140 (GVGGGLIF) each bind ATP. Residues His157, Cys177, Cys179, and Cys184 each coordinate Zn(2+).

It belongs to the ROK (NagC/XylR) family. NagK subfamily.

The enzyme catalyses N-acetyl-D-glucosamine + ATP = N-acetyl-D-glucosamine 6-phosphate + ADP + H(+). The protein operates within cell wall biogenesis; peptidoglycan recycling. In terms of biological role, catalyzes the phosphorylation of N-acetyl-D-glucosamine (GlcNAc) derived from cell-wall degradation, yielding GlcNAc-6-P. This is N-acetyl-D-glucosamine kinase from Escherichia coli O127:H6 (strain E2348/69 / EPEC).